The following is a 175-amino-acid chain: Nucleoside-triphosphatase THEP1 (175 aa).

ATP is bound by residues 15–22 (GNPGVGKT) and 106–113 (VLAIDEIG).

It belongs to the THEP1 NTPase family.

It carries out the reaction a ribonucleoside 5'-triphosphate + H2O = a ribonucleoside 5'-diphosphate + phosphate + H(+). Functionally, has nucleotide phosphatase activity towards ATP, GTP, CTP, TTP and UTP. May hydrolyze nucleoside diphosphates with lower efficiency. This is Nucleoside-triphosphatase THEP1 from Saccharolobus solfataricus (strain ATCC 35092 / DSM 1617 / JCM 11322 / P2) (Sulfolobus solfataricus).